Consider the following 389-residue polypeptide: Oxytocin receptor (389 aa).

The Extracellular portion of the chain corresponds to 1–38 (MEGALAANWSAEAANASAAPPGAEGNRTAGPPRRNEAL). The segment covering 7 to 26 (ANWSAEAANASAAPPGAEGN) has biased composition (low complexity). The interval 7–31 (ANWSAEAANASAAPPGAEGNRTAGP) is disordered. 3 N-linked (GlcNAc...) asparagine glycosylation sites follow: asparagine 8, asparagine 15, and asparagine 26. A helical transmembrane segment spans residues 39–63 (ARVEVAVLCLILLLALSGNACVLLA). Topologically, residues 64–74 (LRTTRQKHSRL) are cytoplasmic. Residues 75–97 (FFFMKHLSIADLVVAVFQVLPQL) form a helical membrane-spanning segment. Residues 98–113 (LWDITFRFYGPDLLCR) are Extracellular-facing. An intrachain disulfide couples cysteine 112 to cysteine 187. A helical transmembrane segment spans residues 114–135 (LVKYLQVVGMFASTYLLLLMSL). Over 136–154 (DRCLAICQPLRSLRRRTDR) the chain is Cytoplasmic. A helical transmembrane segment spans residues 155–175 (LAVLATWLGCLVASAPQVHIF). Over 176 to 202 (SLREVADGVFDCWAVFIQPWGPKAYIT) the chain is Extracellular. A helical transmembrane segment spans residues 203-225 (WITLAVYIVPVIVLAACYGLISF). Topologically, residues 226 to 275 (KIWQNLRLKTAAAAAAEAPEGAAAGDGGRVALARVSSVKLISKAKIRTVK) are cytoplasmic. Residues 276–294 (MTFIIVLAFIVCWTPFFFV) traverse the membrane as a helical segment. The Extracellular segment spans residues 295 to 309 (QMWSVWDANAPKEAS). A helical membrane pass occupies residues 310–332 (AFIIVMLLASLNSCCNPWIYMLF). Over 333-389 (TGHLFHELVQRFLCCSASYLKGRRLGETSASKKSNSSSFVLSHRSSSQRSCSQPSTA) the chain is Cytoplasmic. The tract at residues 361–389 (SASKKSNSSSFVLSHRSSSQRSCSQPSTA) is disordered. Serine 366 and serine 368 each carry phosphoserine.

This sequence belongs to the G-protein coupled receptor 1 family. Vasopressin/oxytocin receptor subfamily.

Its subcellular location is the cell membrane. Receptor for oxytocin. The activity of this receptor is mediated by G proteins which activate a phosphatidylinositol-calcium second messenger system. In Homo sapiens (Human), this protein is Oxytocin receptor (OXTR).